Consider the following 244-residue polypeptide: Phosphoribosylaminoimidazole-succinocarboxamide synthase (244 aa).

The protein belongs to the SAICAR synthetase family.

It carries out the reaction 5-amino-1-(5-phospho-D-ribosyl)imidazole-4-carboxylate + L-aspartate + ATP = (2S)-2-[5-amino-1-(5-phospho-beta-D-ribosyl)imidazole-4-carboxamido]succinate + ADP + phosphate + 2 H(+). It participates in purine metabolism; IMP biosynthesis via de novo pathway; 5-amino-1-(5-phospho-D-ribosyl)imidazole-4-carboxamide from 5-amino-1-(5-phospho-D-ribosyl)imidazole-4-carboxylate: step 1/2. The protein is Phosphoribosylaminoimidazole-succinocarboxamide synthase of Prochlorococcus marinus (strain SARG / CCMP1375 / SS120).